The following is a 485-amino-acid chain: uncharacterized protein (485 aa).

Transmembrane regions (helical) follow at residues 13–33 (WSALSSLTIIVLGFLQMVILS), 38–58 (PFEFGVLSIMTVVFLFTDMLA), 79–99 (ALYWVNIFLGVFLFVVTIILS), 111–131 (LSFLIQLTALVFIIMPHGQQY), 160–180 (VIIGIITKNASCAVFGYLLTV), 211–231 (LLFSFYLTLDSILNYINSSIT), 234–254 (IVARVLGAIYVGGYNLSFNVA), 297–317 (INFPALLGLCIIAKDFVYLVF), 321–341 (WLFIVPTLQLLCIAGAMRMVA), 365–385 (IIIFIPVLYFSTIWNGMVGAA), 388–408 (FLICQAINALLSYFFLLKPVL), 420–440 (FIPFVHTLPMILLLLVCDIYI), and 445–465 (LTFFILKIVIGGGVYILTIFI).

This sequence belongs to the polysaccharide synthase family.

It localises to the cell membrane. This is an uncharacterized protein from Klebsiella pneumoniae.